We begin with the raw amino-acid sequence, 140 residues long: uncharacterized protein (140 aa).

Transmembrane regions (helical) follow at residues 33-53 (LLYV…KYYF) and 59-79 (SLLF…FMGF). Over residues 89 to 104 (EAEPDYRKKQESKNQD) the composition is skewed to basic and acidic residues. A disordered region spans residues 89 to 140 (EAEPDYRKKQESKNQDFLKSQSNEPLEYASSSAVELEKEKNTREGLTILESS). Positions 105 to 121 (FLKSQSNEPLEYASSSA) are enriched in polar residues.

The protein localises to the membrane. This is an uncharacterized protein from Schizosaccharomyces pombe (strain 972 / ATCC 24843) (Fission yeast).